Reading from the N-terminus, the 249-residue chain is Triosephosphate isomerase (249 aa).

9-11 (NWK) contributes to the substrate binding site. Histidine 94 serves as the catalytic Electrophile. The Proton acceptor role is filled by glutamate 166. Substrate-binding positions include glycine 172, serine 214, and 235-236 (GG).

The protein belongs to the triosephosphate isomerase family. In terms of assembly, homodimer.

The protein localises to the cytoplasm. The enzyme catalyses D-glyceraldehyde 3-phosphate = dihydroxyacetone phosphate. Its pathway is carbohydrate biosynthesis; gluconeogenesis. It participates in carbohydrate degradation; glycolysis; D-glyceraldehyde 3-phosphate from glycerone phosphate: step 1/1. Its function is as follows. Involved in the gluconeogenesis. Catalyzes stereospecifically the conversion of dihydroxyacetone phosphate (DHAP) to D-glyceraldehyde-3-phosphate (G3P). This Leptospira biflexa serovar Patoc (strain Patoc 1 / Ames) protein is Triosephosphate isomerase.